The sequence spans 401 residues: Divinyl chlorophyllide a 8-vinyl-reductase, chloroplastic (401 aa).

Residues 1–10 show a composition bias toward polar residues; it reads MATILLSSRL. A disordered region spans residues 1 to 26; it reads MATILLSSRLPTTGTATPSPTRPAPR. Residues 1–54 constitute a chloroplast transit peptide; the sequence is MATILLSSRLPTTGTATPSPTRPAPRFLSFPGTAIRRRGRGPLLASSAVSPPAP.

It localises to the plastid. The protein resides in the chloroplast. The enzyme catalyses protochlorophyllide a + NADP(+) = 3,8-divinyl protochlorophyllide a + NADPH + H(+). It participates in porphyrin-containing compound metabolism; chlorophyll biosynthesis. Its function is as follows. Catalyzes the conversion of divinyl chlorophyllide to monovinyl chlorophyllide. Reduces the 8-vinyl group of the tetrapyrrole to an ethyl group using NADPH as the reductant. Can use (3,8-divinyl)-chlorophyllide a (DV-Chlidea) &gt; (3,8-divinyl)-chlorophyll a (DV-Chla) &gt; (3,8-divinyl)-protochlorophyllide a (DV-Pchlidea) &gt; (3,8-divinyl)-magnesium-protoporphyrin IX monomethyl ester (DV-MPE) &gt; (3,8-divinyl)-magnesium-protoporphyrin IX (DV-Mg-Proto) as substrates. The protein is Divinyl chlorophyllide a 8-vinyl-reductase, chloroplastic (DVR) of Zea mays (Maize).